A 761-amino-acid polypeptide reads, in one-letter code: Subtilisin-like protease SBT3.15 (761 aa).

Residues 1 to 21 (MENSFLSSKLVFLLAIALVLF) form the signal peptide. Residues 22-120 (LNTELSFLTA…VIPNRILKLK (99 aa)) constitute a propeptide, activation peptide. The Inhibitor I9 domain maps to 41–119 (VYIVYLGQRE…HVIPNRILKL (79 aa)). A Peptidase S8 domain is found at 134 to 613 (PTSFSSSSSA…GGLVNPEKAA (480 aa)). N-linked (GlcNAc...) asparagine glycosylation occurs at asparagine 151. Aspartate 164 functions as the Charge relay system in the catalytic mechanism. N-linked (GlcNAc...) asparagine glycosylation occurs at asparagine 197. The Charge relay system role is filled by histidine 241. Asparagine 256 and asparagine 384 each carry an N-linked (GlcNAc...) asparagine glycan. The Charge relay system role is filled by serine 544. N-linked (GlcNAc...) asparagine glycosylation occurs at asparagine 636.

This sequence belongs to the peptidase S8 family.

It is found in the secreted. The protein is Subtilisin-like protease SBT3.15 of Arabidopsis thaliana (Mouse-ear cress).